The chain runs to 293 residues: GTPase Era (293 aa).

One can recognise an Era-type G domain in the interval 2-168; it reads KILFSTIIGR…INEIKKYSYE (167 aa). Residues 10–17 form a G1 region; sequence GRPNVGKS. 10–17 provides a ligand contact to GTP; that stretch reads GRPNVGKS. Positions 36–40 are G2; that stretch reads QATRD. A G3 region spans residues 57–60; that stretch reads DTPG. GTP-binding positions include 57-61 and 118-121; these read DTPGI and TKID. Residues 118-121 form a G4 region; the sequence is TKID. The tract at residues 147-149 is G5; sequence ISS. In terms of domain architecture, KH type-2 spans 199–279; it reads LEQELPHSIL…KLFLKIKVKK (81 aa).

This sequence belongs to the TRAFAC class TrmE-Era-EngA-EngB-Septin-like GTPase superfamily. Era GTPase family. As to quaternary structure, monomer.

Its subcellular location is the cytoplasm. It localises to the cell membrane. Its function is as follows. An essential GTPase that binds both GDP and GTP, with rapid nucleotide exchange. Plays a role in 16S rRNA processing and 30S ribosomal subunit biogenesis and possibly also in cell cycle regulation and energy metabolism. The sequence is that of GTPase Era from Mycoplasmopsis pulmonis (strain UAB CTIP) (Mycoplasma pulmonis).